The sequence spans 356 residues: Protein HEXIM1 (356 aa).

Basic and acidic residues-rich tracts occupy residues 1–11 (MAEPLLTEHQH) and 24–47 (VHEE…DSRW). The interval 1–162 (MAEPLLTEHQ…RPSKKKRHWK (162 aa)) is disordered. Polar residues predominate over residues 48 to 58 (QSRASLQSGSR). Over residues 84-93 (SLEKGEKGQN) the composition is skewed to basic and acidic residues. 2 positions are modified to phosphoserine: S98 and S103. Basic residues predominate over residues 145–162 (LGKKKHRRRPSKKKRHWK). The tract at residues 147–174 (KKKHRRRPSKKKRHWKPYYKLTWEEKKK) is basic region; mediates nuclear localization and interaction with 7SK snRNA and NR3C1. The interval 199–202 (PYNT) is interaction with P-TEFb. The segment at 207–247 (MDDHDQEEPDLKTGLYPKRAAAKSDDTSDEDFVEEAGEEDG) is autoinhibitory acidic region; in absence of 7SK snRNA interacts with the basic region preventing interaction with P-TEFb and modulating subcellular localization. Positions 210-259 (HDQEEPDLKTGLYPKRAAAKSDDTSDEDFVEEAGEEDGGSDGMGGDGSEF) are disordered. The residue at position 230 (S230) is a Phosphoserine. T233 is modified (phosphothreonine). Positions 233–248 (TSDEDFVEEAGEEDGG) are enriched in acidic residues. 3 positions are modified to phosphoserine: S234, S249, and S257. A coiled-coil region spans residues 280 to 346 (SKQELIKEYL…LTENELHRQQ (67 aa)). Residues 283–311 (ELIKEYLELEKCLSRKEDENNRLRLESKR) form a mediates interaction with CCNT1 region. Residues 307–352 (LESKRLGGVDARVRELELELDRLRAENLQLLTENELHRQQERAPLS) form a required for inhibition of ESR1-dependent transcription region.

The protein belongs to the HEXIM family. In terms of assembly, homooligomer and heterooligomer with HEXIM2; probably dimeric. Core component of the 7SK RNP complex, at least composed of 7SK RNA, LARP7, MEPCE, HEXIM1 (or HEXIM2) and P-TEFb (composed of CDK9 and CCNT1/cyclin-T1). Interacts with the N-CoR complex through NCOR1. Interacts with ESR1 and NR3C1. May interact with NF-kappa-B through RELA. Interacts with CCNT2; mediates formation of a tripartite complex with KPNA2. Part of the HDP-RNP complex composed of at least HEXIM1, PRKDC, XRCC5, XRCC6, paraspeckle proteins (SFPQ, NONO, PSPC1, RBM14, and MATR3) and NEAT1 non-coding RNA. Widely expressed with higher expression in heart, skeletal muscle and brain (at protein level).

The protein localises to the nucleus. It localises to the cytoplasm. Its function is as follows. Transcriptional regulator which functions as a general RNA polymerase II transcription inhibitor. Core component of the 7SK RNP complex: in cooperation with 7SK snRNA sequesters P-TEFb in a large inactive 7SK snRNP complex preventing RNA polymerase II phosphorylation and subsequent transcriptional elongation. May also regulate NF-kappa-B, ESR1, NR3C1 and CIITA-dependent transcriptional activity. Plays a role in the regulation of DNA virus-mediated innate immune response by assembling into the HDP-RNP complex, a complex that serves as a platform for IRF3 phosphorylation and subsequent innate immune response activation through the cGAS-STING pathway. The sequence is that of Protein HEXIM1 (Hexim1) from Mus musculus (Mouse).